The sequence spans 347 residues: Tetraacyldisaccharide 4'-kinase (347 aa).

An ATP-binding site is contributed by threonine 54 to threonine 61.

This sequence belongs to the LpxK family.

It catalyses the reaction a lipid A disaccharide + ATP = a lipid IVA + ADP + H(+). It functions in the pathway glycolipid biosynthesis; lipid IV(A) biosynthesis; lipid IV(A) from (3R)-3-hydroxytetradecanoyl-[acyl-carrier-protein] and UDP-N-acetyl-alpha-D-glucosamine: step 6/6. Functionally, transfers the gamma-phosphate of ATP to the 4'-position of a tetraacyldisaccharide 1-phosphate intermediate (termed DS-1-P) to form tetraacyldisaccharide 1,4'-bis-phosphate (lipid IVA). The chain is Tetraacyldisaccharide 4'-kinase from Rhizobium etli (strain CIAT 652).